A 282-amino-acid chain; its full sequence is Undecaprenyl-diphosphatase (282 aa).

7 consecutive transmembrane segments (helical) span residues Ala-45–Ile-65, Trp-86–Leu-106, Phe-114–Ile-134, Leu-151–Thr-171, Phe-196–Leu-216, Gly-224–Ile-244, and Phe-256–Phe-276.

Belongs to the UppP family.

It is found in the cell membrane. The catalysed reaction is di-trans,octa-cis-undecaprenyl diphosphate + H2O = di-trans,octa-cis-undecaprenyl phosphate + phosphate + H(+). Its function is as follows. Catalyzes the dephosphorylation of undecaprenyl diphosphate (UPP). Confers resistance to bacitracin. The protein is Undecaprenyl-diphosphatase of Streptococcus gordonii (strain Challis / ATCC 35105 / BCRC 15272 / CH1 / DL1 / V288).